Reading from the N-terminus, the 30-residue chain is Hainantoxin F7-28.42 (30 aa).

Expressed by the venom gland.

It localises to the secreted. This is Hainantoxin F7-28.42 from Cyriopagopus hainanus (Chinese bird spider).